Reading from the N-terminus, the 368-residue chain is Serine/threonine-protein phosphatase PP2A-like PPG1 (368 aa).

Positions 50, 52, 78, and 110 each coordinate Mn(2+). H111 acts as the Proton donor in catalysis. Residues H161 and H247 each contribute to the Mn(2+) site.

Belongs to the PPP phosphatase family. PP-2A subfamily. Inactivated in a complex with phosphatase methylesterase PPE1 (PP2Ai). Interacts with phosphatase 2A activator RRD1, which can reactivate PP2Ai by dissociating the catalytic subunit from the complex. Interacts with TAP42. It depends on Mn(2+) as a cofactor. Reversibly methyl esterified on Leu-368 by leucine carboxyl methyltransferase 1 (PPM1) and protein phosphatase methylesterase 1 (PPE1). Carboxyl methylation influences the affinity of the catalytic subunit for the different regulatory subunits, thereby modulating the PP2A holoenzyme's substrate specificity, enzyme activity and cellular localization.

It catalyses the reaction O-phospho-L-seryl-[protein] + H2O = L-seryl-[protein] + phosphate. The enzyme catalyses O-phospho-L-threonyl-[protein] + H2O = L-threonyl-[protein] + phosphate. Its function is as follows. Involved in glycogen accumulation. In Saccharomyces cerevisiae (strain ATCC 204508 / S288c) (Baker's yeast), this protein is Serine/threonine-protein phosphatase PP2A-like PPG1 (PPG1).